Here is a 142-residue protein sequence, read N- to C-terminus: Putative regulator of rDNA transcription protein 16 (142 aa).

3 helical membrane-spanning segments follow: residues 19-39 (ILLT…VMVA), 84-104 (FLLF…AIFL), and 111-131 (SIFI…GLCH).

It localises to the membrane. Functionally, identified in a screen for mutants with decreased levels of rDNA transcription. This is Putative regulator of rDNA transcription protein 16 (RRT16) from Saccharomyces cerevisiae (strain ATCC 204508 / S288c) (Baker's yeast).